The following is a 705-amino-acid chain: Probable E3 ubiquitin-protein ligase MID2 (705 aa).

The RING-type zinc finger occupies 30–80; it reads CPICLELFEDPLLLPCAHSLCFSCAHRILVSSCSSGESIEPITAFQCPTCR. Residues 137-184 form a B box-type 1; degenerate zinc finger; the sequence is IACQFCEQDPPRDAVKTCITCEVSYCDRCLRATHPNKKPFTSHRLVEP. Residues 190-232 form a B box-type 2 zinc finger; sequence LRGITCLDHENEKVNMYCVSDDQLICALCKLVGRHRDHQVASL. 4 residues coordinate Zn(2+): Cys-195, His-198, Cys-218, and His-224. Residues 233 to 301 adopt a coiled-coil conformation; sequence NDRFEKLKQT…IIQQRKQMIA (69 aa). The COS domain maps to 340–399; the sequence is LKENDQARFLQSAKNIAERVAMATASSQVLIPDINFNDAFENFALDFSREKKLLEGLDYL. The Fibronectin type-III domain occupies 404–504; the sequence is PPSIREELCT…EPTRLKTNSQ (101 aa). Positions 486–679 constitute a B30.2/SPRY domain; it reads INQAGSRNSE…ILSGLPAPDF (194 aa).

It belongs to the TRIM/RBCC family. Homodimer or heterodimer with MID1. Interacts with IGBP1. In terms of processing, phosphorylated on serine and threonine residues. Low abundance in brain and lung, with even lower levels in heart, liver, and kidney.

The protein localises to the cytoplasm. The protein resides in the cytoskeleton. The catalysed reaction is S-ubiquitinyl-[E2 ubiquitin-conjugating enzyme]-L-cysteine + [acceptor protein]-L-lysine = [E2 ubiquitin-conjugating enzyme]-L-cysteine + N(6)-ubiquitinyl-[acceptor protein]-L-lysine.. Its pathway is protein modification; protein ubiquitination. Functionally, E3 ubiquitin ligase that plays a role in microtubule stabilization. Mediates the 'Lys-48'-linked polyubiquitination of LRRK2 to drive its localization to microtubules and its proteasomal degradation in neurons. This ubiquitination inhibits LRRK2 kinase activation by RAB29. This Mus musculus (Mouse) protein is Probable E3 ubiquitin-protein ligase MID2 (Mid2).